Here is a 650-residue protein sequence, read N- to C-terminus: Zinc finger CCCH domain-containing protein 55 (650 aa).

The interval 67 to 162 (NSPSSTPTSP…THSGSADAAG (96 aa)) is disordered. Positions 105 to 128 (SPSSPSSTSPWSFNNCINGNNGNN) are enriched in low complexity. Positions 141-154 (PFSSHQSNGLSATH) are enriched in polar residues. The C3H1-type zinc-finger motif lies at 232 to 254 (PCVYFSRGLCKNGESCKFIHGGY). The RRM domain maps to 357–433 (RQIYLTFPAD…RVLVKPYKEK (77 aa)). The tract at residues 566 to 650 (PVVNPMSVNN…PPVTTNNLMQ (85 aa)) is disordered. Residues 581–590 (AKEETNKSEL) are compositionally biased toward basic and acidic residues.

This is Zinc finger CCCH domain-containing protein 55 from Arabidopsis thaliana (Mouse-ear cress).